A 690-amino-acid polypeptide reads, in one-letter code: Elongation factor G (690 aa).

Positions 8 to 283 constitute a tr-type G domain; that stretch reads EDYRNFGIMA…AVVDYLPSPV (276 aa). Residues 17-24, 81-85, and 135-138 each bind GTP; these read AHIDAGKT, DTPGH, and NKMD.

It belongs to the TRAFAC class translation factor GTPase superfamily. Classic translation factor GTPase family. EF-G/EF-2 subfamily.

The protein localises to the cytoplasm. Its function is as follows. Catalyzes the GTP-dependent ribosomal translocation step during translation elongation. During this step, the ribosome changes from the pre-translocational (PRE) to the post-translocational (POST) state as the newly formed A-site-bound peptidyl-tRNA and P-site-bound deacylated tRNA move to the P and E sites, respectively. Catalyzes the coordinated movement of the two tRNA molecules, the mRNA and conformational changes in the ribosome. The chain is Elongation factor G from Rhodopseudomonas palustris (strain BisB5).